Consider the following 47-residue polypeptide: Exoenzymes regulatory protein AepH (47 aa).

Composition is skewed to basic and acidic residues over residues 1–17 (MGQE…QDGH) and 33–47 (TKKE…DANV). The segment at 1–47 (MGQEPKGIESRKIQDGHVRKKVGRQQGLWVRTTKKEKFSRMSRDANV) is disordered.

Involved in the control of extracellular enzymes production. Stimulates PEL, PEH, CEL, and PRT production. In Pectobacterium carotovorum subsp. carotovorum (Erwinia carotovora subsp. carotovora), this protein is Exoenzymes regulatory protein AepH (aepH).